The following is a 312-amino-acid chain: Pectinesterase inhibitor 10 (312 aa).

The first 25 residues, 1 to 25 (MNILSQTQILHLSIAILLFITTSSS), serve as a signal peptide directing secretion. Composition is skewed to low complexity over residues 24–36 (SSSL…SPSL) and 44–55 (SPSSAPPSSLSP). Residues 24–141 (SSSLSPSSSS…PSSSSSTYSN (118 aa)) are disordered. Over residues 56 to 75 (SSPPPLSLSPSSPPPPPPSS) the composition is skewed to pro residues. Low complexity-rich tracts occupy residues 76-85 (SPLSSLSPSL) and 93-104 (SPSSAPPSSLSP). The span at 105 to 124 (SSPPPLSLSPSSPPPPPPSS) shows a compositional bias: pro residues. Residues 125–137 (SPLSSLSPSSSSS) are compositionally biased toward low complexity. Residues Asn141, Asn153, Asn185, and Asn200 are each glycosylated (N-linked (GlcNAc...) asparagine). An intrachain disulfide couples Cys152 to Cys161. The cysteines at positions 218 and 268 are disulfide-linked.

Belongs to the PMEI family.

It is found in the secreted. The protein resides in the extracellular space. The protein localises to the apoplast. Pectin methylesterase (PME) inhibitor involved in the maintenance of cell wall integrity in response to necrotrophic pathogens. Modulates PME activity and pectin methylesterification during infection by Botrytis cinerea and contributes to resistance against the pathogen. The chain is Pectinesterase inhibitor 10 from Arabidopsis thaliana (Mouse-ear cress).